The chain runs to 1159 residues: Nucleoporin nup124 (1159 aa).

Residues 1–13 are compositionally biased toward polar residues; sequence MPPVSKNTRTSSK. 4 disordered regions span residues 1-28, 44-77, 106-125, and 183-273; these read MPPV…SSRP, FTSG…ELTP, HTNT…TNSP, and TLNI…RRRR. 2 stretches are compositionally biased toward basic and acidic residues: residues 48–62 and 106–119; these read LDEK…DRKS and HTNT…KQKQ. At Ser211 the chain carries Phosphoserine. The span at 226-239 shows a compositional bias: polar residues; the sequence is NEPSAKQNKSFSGN. Residues 240–260 show a composition bias toward basic and acidic residues; sequence DSHKSLTDIRDKENGETEVSA. Residues 263–273 are compositionally biased toward basic residues; that stretch reads HVPHRSSRRRR. At Ser380 the chain carries Phosphoserine. The segment covering 426-441 has biased composition (basic and acidic residues); the sequence is DNKTFEHQPLSKDTEA. Disordered stretches follow at residues 426-715, 746-780, and 794-1159; these read DNKT…NTEN, EEAV…AVPS, and EKTN…RRKR. The span at 442–453 shows a compositional bias: polar residues; that stretch reads PKSQFSSSPTKE. Ser465 is subject to Phosphoserine. Residues 480-494 show a composition bias toward basic and acidic residues; that stretch reads FKFEPKTEATTDKKL. Positions 528-549 are enriched in polar residues; sequence PSKTQETPSITENKPSFFSQLS. Phosphoserine is present on Ser546. Residues 550–560 show a composition bias toward basic and acidic residues; that stretch reads PKREETEKKDN. The span at 590–626 shows a compositional bias: polar residues; it reads PTFNFSLNNASSTQDTTKPTLQFNFGSSFGKPTSNIF. The segment covering 642 to 656 has biased composition (low complexity); the sequence is ASESKPSAPESKPSS. 2 stretches are compositionally biased toward polar residues: residues 657–672 and 696–715; these read GFGN…FNLT and DSLS…NTEN. The span at 746–758 shows a compositional bias: basic and acidic residues; that stretch reads EEAVKQKETEKEV. Composition is skewed to polar residues over residues 771–780 and 798–814; these read SVSSNNAVPS and ENNI…NATK. The segment covering 815–824 has biased composition (basic and acidic residues); it reads RTLEQTEDAK. Polar residues predominate over residues 830-861; sequence FGSTTEQANKKASTSNETTKPQLDTSSKTDGV. Residues 863–879 are compositionally biased toward low complexity; that stretch reads ANAPFSFASAFNAPKPS. Residues 880–908 are compositionally biased toward polar residues; it reads TNTADGKDSASNLTTPSPAFSFGNNSGVK. Positions 909-926 are enriched in low complexity; sequence ASSNNNPSTNSSTAPFSF. Positions 927–947 are enriched in polar residues; it reads GTSNKPAFSFGSATSKTTSEG. The segment covering 948–963 has biased composition (low complexity); the sequence is TAPAASASAPAPTTSA. Polar residues-rich tracts occupy residues 1001–1019, 1042–1064, 1074–1087, 1095–1108, and 1116–1144; these read GANN…TPAP, ITNT…NAGS, NTPN…NASQ, EPSN…STGF, and SAFN…QTNA.

This sequence to yeast nucleoporins NUP1 and NUP2.

The protein resides in the nucleus. It is found in the nuclear pore complex. In terms of biological role, nucleoporins may be involved in both binding and translocation of the proteins during nucleocytoplasmic transport. In S.pombe it is required for the nuclear localization of retrotransposon tf1. The chain is Nucleoporin nup124 (nup124) from Schizosaccharomyces pombe (strain 972 / ATCC 24843) (Fission yeast).